The primary structure comprises 242 residues: Small ribosomal subunit protein uS2 (242 aa).

Belongs to the universal ribosomal protein uS2 family.

The polypeptide is Small ribosomal subunit protein uS2 (Shewanella halifaxensis (strain HAW-EB4)).